The primary structure comprises 275 residues: Membrane protein insertase MisCB (275 aa).

A signal peptide spans 1-18 (MLKTYQKLLAMGIFLIVL). The N-palmitoyl cysteine moiety is linked to residue C19. C19 carries the S-diacylglycerol cysteine lipid modification. 5 helical membrane passes run 63–83 (YGLSIILVTIIVRIVVLPLFV), 139–159 (AMGCLPMLIQSPIMIGLYYAI), 172–192 (WFSLGQSDILMSLSAGIMYFV), 219–239 (LMVFIFPVMMTIFSLNVPAAL), and 240–260 (PLYWFTSGLFLTVQNIVLQMT).

Belongs to the OXA1/ALB3/YidC family. Type 2 subfamily. In terms of assembly, mostly monomeric, it may also form dimers. Interacts with SpoIIIAE. Forms a complex with the F(1)F(0) ATP synthase in which can be found the alpha, beta, gamma, delta and epsilon subunits of F(1) and a, b and subunits of F(0). YqgA is found in the same complex.

Its subcellular location is the cell membrane. Its function is as follows. Required for the insertion and/or proper folding and/or complex formation of integral membrane proteins into the membrane. Involved in integration of membrane proteins that insert both dependently and independently of the Sec translocase complex, as well as at least some lipoproteins. Also involved in protein secretion processes. It has an overlapping, although partly distinct, function compared to SpoIIIJ(MisCB). The polypeptide is Membrane protein insertase MisCB (misCB) (Bacillus subtilis (strain 168)).